The sequence spans 194 residues: Large ribosomal subunit protein eL15 (194 aa).

The tract at residues 165-194 (AGKKGRGLMNKGKGAEKVRPGIRANKKLGK) is disordered.

It belongs to the eukaryotic ribosomal protein eL15 family.

The protein is Large ribosomal subunit protein eL15 of Methanococcus aeolicus (strain ATCC BAA-1280 / DSM 17508 / OCM 812 / Nankai-3).